We begin with the raw amino-acid sequence, 1359 residues long: MPYSLTEKKRIRKDFSKLHSILKTPFLLTIQIGSFLDFLQMDVPPGKRKDKGLHAAFKSVFPIKSYTEYAELQYSSYHLGVPSFEVKECQVRGLTYAAPLRVKLRLVIYDKESPASEQVVKDVKEQEVYMGEIPLMTPKGNFVINGTERVIVSQLHRSPGVIFEHDKGKTHSSGKLLFSARIIPYRGSWLDFEFDPKDCVYARIDRRRKLLATILLRALGYSTEEILIMFFETISVKRQGSSYLLDLVPQRLRGESLPFDIASPDGEVIVEAGRRVTARHIKQMEKAGMKTLPAPKEFLIGKTLARDLIDAGTGEVLAKANDEITAELMTALEDANIQAFDLIYTNDLDRGSFISDSLRLDPTTTPLEAQMEIYRVMRPGEPPTKEAAQNLFQNLFFNPERYDLSPVGRMKFNRRLGKEDITGPSILSKEDIVDVIKTLVDIRNGYGSVDDVDHLGNRRVRSVGEMAENQFRVGLVRVERAVRERLSLAESEGLMPQELINAKPVSAAVKEFFGSSQLSQFMDQNNPLSEVTHKRRVSALGPGGLTRERAGFEVRDVHPTHYGRVCPIETPEGPNIGLINSLAVYARINQYGFIETPYRKVVDGKVAGEVDYLSAIEEGQYVIAQANAAADEEGRLIDMLVSCRHKNEFTLLPPEKVQYIDVSPKQIVSVAASLIPFLEHDDANRALMGSNMQRQAVPTLRAETPLVGTGMEQVVARDSGVMVVARRGGIVDSVDAARVVVRVNDEETASDEPGVDIYNLIKYARSNQNTCINQSPLVKPGDTVAIGDVLADGPSTDMGELALGQNLLVAFMPWNGYNFEDSILISERVVEEDRFTSIHIEELTCFARDTKLGPEEISSDIPNVSEAALSKLDEAGIVYIGAEVKPGDILVGKVTPKGETQLTPEEKLLRAIFGEKASDVKDTSLRVSSGMQGTVIDVQVFTRDGVEKDTRALEIEEMELAKIKKDLRDEFRIVETDIYQRLEKVLVGKTVEGGPAELKAGTQITQNYLADLPRERWFEIRLRSEEAGRQLESVAGQLKEQRVAMDEKFQQQRAKLTSGHDLPPGVQKMVKVYLAVKRRVQPGDKMAGRHGNKGVISTIVPIEDMPYMEDGTPVDIVLNPLGVPSRMNIGQILETHLGWAAKGLGRKIGALLESGEQASELRVFLDRIYNASGKKEDLNSLSDEEVLELANNLKDGVPMATPVFDGASEQEIKTMLELADLPTNGQTNLYDGRSGEAFARPVTVGYMHMLKLNHLVDDKMHARSTGPYSLVTQQPLGGKAQFGGQRFGEMEVWALESYGAAYTLQEMLTVKSDDVNGRTKMYKNIVDGDYRMEAGMPESFNVLTKEIRALGIDIELEQD.

It belongs to the RNA polymerase beta chain family. In terms of assembly, the RNAP catalytic core consists of 2 alpha, 1 beta, 1 beta' and 1 omega subunit. When a sigma factor is associated with the core the holoenzyme is formed, which can initiate transcription.

The enzyme catalyses RNA(n) + a ribonucleoside 5'-triphosphate = RNA(n+1) + diphosphate. Functionally, DNA-dependent RNA polymerase catalyzes the transcription of DNA into RNA using the four ribonucleoside triphosphates as substrates. In Nitrosococcus oceani (strain ATCC 19707 / BCRC 17464 / JCM 30415 / NCIMB 11848 / C-107), this protein is DNA-directed RNA polymerase subunit beta.